The primary structure comprises 1028 residues: MEEQVVNAIQIASNPSADQALKAQAFDYVNQLRSDPSGWQICLALFTKTPQHSEVVRHVALEVVNSAAQAGLIDPQALGYVRDGLMAYLRQVYAQETATPDSPGIQNKIAQTITFLFSALYGNGWESFFDDLLSLTYKSPSSTGRDNAPGIVFYLRVINSIHDEIGDVLVSRSRAEQDKANSLKDLIRMRDMQKIAGSWQEILSDWRDGNDIIVEMALKAVGSWVSWIDIGLVVNQTMLDLLFQQLARAQKADLRAGEDKVRDAAVDVFTEIVGKKMKAEDKVDMIIFLNLDTIVSQLSNSPPLHENRFTFKYDTDLAETVAKLVNITVCDIIRALENESTTPESKEKAGGLLQAFLPHILRYFSDEYDEVCSTVIPCVSDLLQYLRKIAKSNPALAAQHSSTLLPILKAIIAKMRYDETSSWGDEDDQADEAEFQELRKRLGVLQQSIAAVNEQLYIDAVSEVVGTTFENLRQSGAQVDWRDLDLALHEMFLFGDIAVKAGSLYTKGVPNNAAAERLVEMMMRMVESDIRSFTHPATQLGYMEICVRYSSFFLNHTQLIPGVLESFLQLIHHPIKKVKTRSWYLFQRLVKQLRAHIGNVAENVVGALGDLLVIRAELASEGSDGDDSDDHEGSVDAVFTSQLYLFEAVGIISSTPTVPTDKQALYAQSVLSPVFVDMEKNLAPAKANDERAVQQIHHDIMALGTLAKGFSDWVPGTHSPASLPAAEVSEVFLQASEATLVALESLKGSFSVRTAARFAFSRLIGVLGSRILPQLPRWIDGLMTQTSSRDEMALFLRLLDQVIFGFKGEIYGILDALLTPFLQRVFSGIADPTTGTDDEIHLAELKREYINFLLAVLNNDLGAVIISERNQPMFDTVITTIEHFAKDVEDYTTAKMAFSLLSKMGSSWGGPDITPDGANGATAQQVALPGFGQFMITRMSPLCWALPATPSFNSKDAQAKQVLAEAGGLQRTIYGKTGMEYIEYLRDRELPSMGMGAELVEEFVGALSRLDLKGFRQFFPSFIQRLSA.

The protein belongs to the exportin family.

Its subcellular location is the nucleus. The protein localises to the cytoplasm. In terms of biological role, tRNA nucleus export receptor which facilitates tRNA translocation across the nuclear pore complex. Involved in pre-tRNA splicing, probably by affecting the interaction of pre-tRNA with splicing endonuclease. In Aspergillus terreus (strain NIH 2624 / FGSC A1156), this protein is Exportin-T (los1).